Reading from the N-terminus, the 263-residue chain is 5'-nucleotidase SurE (263 aa).

A divalent metal cation is bound by residues aspartate 21, aspartate 22, serine 52, and asparagine 105.

The protein belongs to the SurE nucleotidase family. Requires a divalent metal cation as cofactor.

It is found in the cytoplasm. It carries out the reaction a ribonucleoside 5'-phosphate + H2O = a ribonucleoside + phosphate. Functionally, nucleotidase that shows phosphatase activity on nucleoside 5'-monophosphates. The chain is 5'-nucleotidase SurE from Vibrio cholerae serotype O1 (strain ATCC 39541 / Classical Ogawa 395 / O395).